We begin with the raw amino-acid sequence, 263 residues long: Small ribosomal subunit protein eS4 (263 aa).

The S4 RNA-binding domain maps to 42–105 (LPLIIFLRNR…GENFRLIYDV (64 aa)).

This sequence belongs to the eukaryotic ribosomal protein eS4 family. As to quaternary structure, component of the small ribosomal subunit. Part of the small subunit (SSU) processome, composed of more than 70 proteins and the RNA chaperone small nucleolar RNA (snoRNA) U3.

It is found in the cytoplasm. Its subcellular location is the nucleus. The protein resides in the nucleolus. Functionally, component of the small ribosomal subunit. The ribosome is a large ribonucleoprotein complex responsible for the synthesis of proteins in the cell. Part of the small subunit (SSU) processome, first precursor of the small eukaryotic ribosomal subunit. During the assembly of the SSU processome in the nucleolus, many ribosome biogenesis factors, an RNA chaperone and ribosomal proteins associate with the nascent pre-rRNA and work in concert to generate RNA folding, modifications, rearrangements and cleavage as well as targeted degradation of pre-ribosomal RNA by the RNA exosome. The chain is Small ribosomal subunit protein eS4 (rps4x) from Danio rerio (Zebrafish).